The following is a 367-amino-acid chain: Probable sugar phosphate/phosphate translocator At1g48230 (367 aa).

10 helical membrane-spanning segments follow: residues 9 to 29 (LVLTYIYLLIYIILSSGVILY), 43 to 63 (LPITLTMIHMGFSGFVAFLLI), 76 to 96 (FEIYVTCVVPISAFFASSLWF), 106 to 126 (VAFIQMLKALMPVATFLMAVV), 140 to 160 (MVLVSVGVVVSSYGEINFNVI), 163 to 183 (VYQVMGIFAEALRLVLTQVLL), 193 to 213 (VTSLYYIAPCSFVFLSLPWYV), 229 to 249 (WIFFSNALCALALNFSIFLVI), 257 to 276 (IRVAGVLKDWILIALSTVIF), and 280 to 302 (TITGLNITGYAIALCGVVMYNYI). Basic and acidic residues predominate over residues 321-330 (ITKDWKEKNS). The tract at residues 321–341 (ITKDWKEKNSSDGGSPRGLEL) is disordered.

This sequence belongs to the TPT transporter family. TPT (TC 2.A.7.9) subfamily.

It is found in the membrane. This Arabidopsis thaliana (Mouse-ear cress) protein is Probable sugar phosphate/phosphate translocator At1g48230.